Here is a 209-residue protein sequence, read N- to C-terminus: Endonuclease III (209 aa).

The region spanning 108–127 is the HhH domain; that stretch reads RTELESLPGVGRKTANIILN. [4Fe-4S] cluster is bound by residues C187, C194, C197, and C203.

Belongs to the Nth/MutY family. The cofactor is [4Fe-4S] cluster.

It carries out the reaction 2'-deoxyribonucleotide-(2'-deoxyribose 5'-phosphate)-2'-deoxyribonucleotide-DNA = a 3'-end 2'-deoxyribonucleotide-(2,3-dehydro-2,3-deoxyribose 5'-phosphate)-DNA + a 5'-end 5'-phospho-2'-deoxyribonucleoside-DNA + H(+). DNA repair enzyme that has both DNA N-glycosylase activity and AP-lyase activity. The DNA N-glycosylase activity releases various damaged pyrimidines from DNA by cleaving the N-glycosidic bond, leaving an AP (apurinic/apyrimidinic) site. The AP-lyase activity cleaves the phosphodiester bond 3' to the AP site by a beta-elimination, leaving a 3'-terminal unsaturated sugar and a product with a terminal 5'-phosphate. The protein is Endonuclease III of Buchnera aphidicola subsp. Schizaphis graminum (strain Sg).